The primary structure comprises 391 residues: 5-amino-6-(D-ribitylamino)uracil--L-tyrosine 4-hydroxyphenyl transferase (391 aa).

One can recognise a Radical SAM core domain in the interval 55–302 (VTYVINRNIN…GAVARIYLGN (248 aa)). [4Fe-4S] cluster-binding residues include C69, C73, and C76.

The protein belongs to the radical SAM superfamily. CofH family. As to quaternary structure, consists of two subunits, CofG and CofH. Requires [4Fe-4S] cluster as cofactor.

The catalysed reaction is 5-amino-6-(D-ribitylamino)uracil + L-tyrosine + S-adenosyl-L-methionine = 5-amino-5-(4-hydroxybenzyl)-6-(D-ribitylimino)-5,6-dihydrouracil + 2-iminoacetate + 5'-deoxyadenosine + L-methionine + H(+). It functions in the pathway cofactor biosynthesis; coenzyme F0 biosynthesis. Functionally, catalyzes the radical-mediated synthesis of 5-amino-5-(4-hydroxybenzyl)-6-(D-ribitylimino)-5,6-dihydrouracil from 5-amino-6-(D-ribitylamino)uracil and L-tyrosine. In Nostoc sp. (strain PCC 7120 / SAG 25.82 / UTEX 2576), this protein is 5-amino-6-(D-ribitylamino)uracil--L-tyrosine 4-hydroxyphenyl transferase.